We begin with the raw amino-acid sequence, 75 residues long: ATP synthase subunit c (75 aa).

2 helical membrane passes run 13–33 (LNVVGYGLAAIGPGIGLGILI) and 54–74 (MFLGLAFVEVLALLGFVLAFI).

It belongs to the ATPase C chain family. In terms of assembly, F-type ATPases have 2 components, F(1) - the catalytic core - and F(0) - the membrane proton channel. F(1) has five subunits: alpha(3), beta(3), gamma(1), delta(1), epsilon(1). F(0) has three main subunits: a(1), b(2) and c(10-14). The alpha and beta chains form an alternating ring which encloses part of the gamma chain. F(1) is attached to F(0) by a central stalk formed by the gamma and epsilon chains, while a peripheral stalk is formed by the delta and b chains.

The protein resides in the cell membrane. F(1)F(0) ATP synthase produces ATP from ADP in the presence of a proton or sodium gradient. F-type ATPases consist of two structural domains, F(1) containing the extramembraneous catalytic core and F(0) containing the membrane proton channel, linked together by a central stalk and a peripheral stalk. During catalysis, ATP synthesis in the catalytic domain of F(1) is coupled via a rotary mechanism of the central stalk subunits to proton translocation. Functionally, key component of the F(0) channel; it plays a direct role in translocation across the membrane. A homomeric c-ring of between 10-14 subunits forms the central stalk rotor element with the F(1) delta and epsilon subunits. The chain is ATP synthase subunit c from Bifidobacterium adolescentis (strain ATCC 15703 / DSM 20083 / NCTC 11814 / E194a).